The sequence spans 227 residues: Ribosomal RNA small subunit methyltransferase G (227 aa).

S-adenosyl-L-methionine contacts are provided by residues glycine 74, leucine 79, 124–125 (AE), and arginine 142.

It belongs to the methyltransferase superfamily. RNA methyltransferase RsmG family.

It localises to the cytoplasm. Specifically methylates the N7 position of guanine in position 518 of 16S rRNA. In Mycolicibacterium vanbaalenii (strain DSM 7251 / JCM 13017 / BCRC 16820 / KCTC 9966 / NRRL B-24157 / PYR-1) (Mycobacterium vanbaalenii), this protein is Ribosomal RNA small subunit methyltransferase G.